The sequence spans 92 residues: Large ribosomal subunit protein bL27 (92 aa).

Positions 1 to 10 (MLLQLQIQLF) are excised as a propeptide.

This sequence belongs to the bacterial ribosomal protein bL27 family. Post-translationally, the N-terminus is cleaved by ribosomal processing cysteine protease Prp.

This is Large ribosomal subunit protein bL27 from Aster yellows witches'-broom phytoplasma (strain AYWB).